The sequence spans 82 residues: Toxin GTx1-15 (82 aa).

A signal peptide spans 1–21 (MKTSVVFVIAGLALLSVACYA). A propeptide spanning residues 22–46 (SELKEQSSINEVLSTIFHFEQPEER) is cleaved from the precursor. Disulfide bonds link Cys48–Cys63, Cys55–Cys69, and Cys62–Cys76. Phenylalanine amide is present on Phe80.

It belongs to the neurotoxin 10 (Hwtx-1) family. 08 (Gtx1-15) subfamily. In terms of tissue distribution, expressed by the venom gland.

The protein resides in the secreted. Potent voltage-gated sodium channel blocker. Potently inhibits the voltage-gated sodium channels Nav1.7/SCN9A (IC(50)=0.58-10 nM). Shows a moderate activity on Nav1.1/SCN1A (IC(50)=6 nM), Nav1.2/SCN2A (IC(50)=5-128 nM), Nav1.3/SCN3A (IC(50)=20.3-170 nM), and Nav1.6/SCN8A (IC(50)=17-20.1 nM). Shows an unclear inhibition of Nav1.4/SCN4A (IC(50)=200 nM to &gt;10 uM), Nav1.5/SCN5A (IC(50)=140 nM to &gt;10 uM) and Nav1.8/SCN10A (IC(50)=68-12200 nM). Weakly blocks the low voltage-gated calcium channels Cav3.1/CACNA1G (30% inhibition of the peak current by 9.8 nM of the toxin). It shows moderate affinity for lipid bilayers. The chain is Toxin GTx1-15 from Grammostola rosea (Chilean rose tarantula).